A 121-amino-acid chain; its full sequence is MSITKDQILEALAEMSVMEVVELIEAMEEKFGVSAAAAVVSGGADAGAAEEQTEFDVILTSHGDNKVATIKALRAATGLGLKEAKGMAESAPVAVKEAITKEEAEALKTDLEAAGAAVEIK.

It belongs to the bacterial ribosomal protein bL12 family. In terms of assembly, homodimer. Part of the ribosomal stalk of the 50S ribosomal subunit. Forms a multimeric L10(L12)X complex, where L10 forms an elongated spine to which 2 to 4 L12 dimers bind in a sequential fashion. Binds GTP-bound translation factors.

Its function is as follows. Forms part of the ribosomal stalk which helps the ribosome interact with GTP-bound translation factors. Is thus essential for accurate translation. The protein is Large ribosomal subunit protein bL12 of Shewanella piezotolerans (strain WP3 / JCM 13877).